A 219-amino-acid chain; its full sequence is 3-dehydroquinate dehydratase (219 aa).

3-dehydroquinate is bound by residues S10, 29–31, and R59; that span reads EVR. The active-site Proton donor/acceptor is H116. K142 serves as the catalytic Schiff-base intermediate with substrate. 3-dehydroquinate is bound by residues R180 and Q203.

Belongs to the type-I 3-dehydroquinase family. As to quaternary structure, homodimer.

It catalyses the reaction 3-dehydroquinate = 3-dehydroshikimate + H2O. It participates in metabolic intermediate biosynthesis; chorismate biosynthesis; chorismate from D-erythrose 4-phosphate and phosphoenolpyruvate: step 3/7. Its function is as follows. Involved in the third step of the chorismate pathway, which leads to the biosynthesis of aromatic amino acids. Catalyzes the cis-dehydration of 3-dehydroquinate (DHQ) and introduces the first double bond of the aromatic ring to yield 3-dehydroshikimate. The polypeptide is 3-dehydroquinate dehydratase (Methanocella arvoryzae (strain DSM 22066 / NBRC 105507 / MRE50)).